The primary structure comprises 1791 residues: Protein TIC 214 (1791 aa).

6 helical membrane-spanning segments follow: residues 19–39, 68–88, 91–111, 133–153, 176–196, and 227–247; these read IINS…FSIG, FIAG…HLAL, PHTI…WNNH, VFLN…SSML, VGWL…LVWI, and IFSI…PSPI. The disordered stretch occupies residues 1492–1511; it reads ASQVELESDKENKKNPESAL. The span at 1498 to 1511 shows a compositional bias: basic and acidic residues; that stretch reads ESDKENKKNPESAL.

This sequence belongs to the TIC214 family. Part of the Tic complex.

The protein localises to the plastid. It localises to the chloroplast inner membrane. In terms of biological role, involved in protein precursor import into chloroplasts. May be part of an intermediate translocation complex acting as a protein-conducting channel at the inner envelope. In Barbarea verna (Land cress), this protein is Protein TIC 214.